A 479-amino-acid chain; its full sequence is MSIVVKNNIHWVGQRDWEVRDFHGTEYKTLRGSSYNSYLIREEKNVLIDTVDHKFSREFVQNLRNEIDLADIDYIVINHAEEDHAGALTELMAQIPDTPIYCTANAIDSINGHHHHPEWNFNVVKTGDTLDIGNGKQLIFVETPMLHWPDSMMTYLTGDAVLFSNDAFGQHYCDEHLFNDEVDQTELFEQCQRYYANILTPFSRLVTPKITEILGFNLPVDMIATSHGVVWRDNPTQIVELYLKWAADYQEDRITIFYDTMSNNTRMMADAIAQGIAETDPRVAVKIFNVARSDKNEILTNVFRSKGVLVGTSTMNNVMMPKIAGLVEEMTGLRFRNKRASAFGSHGWSGGAVDRLSTRLQDAGFEMSLSLKAKWRPDQDALKLCREHGREIARQWALAPLPQSTVNTVVKEETSATTTADLGPRMQCSVCQWIYDPAKGEPMQDVAPGTPWSEVPDNFLCPECSLGKDVFEELASEAK.

Positions 30–210 are zinc metallo-hydrolase; it reads LRGSSYNSYL…PFSRLVTPKI (181 aa). H79, E81, D83, H147, D166, and H227 together coordinate Fe cation. The region spanning 254–393 is the Flavodoxin-like domain; it reads ITIFYDTMSN…LCREHGREIA (140 aa). Residues 260-264 and 342-369 each bind FMN; these read TMSNN and AFGS…EMSL. One can recognise a Rubredoxin-like domain in the interval 423–479; it reads GPRMQCSVCQWIYDPAKGEPMQDVAPGTPWSEVPDNFLCPECSLGKDVFEELASEAK. Residues C428, C431, C461, and C464 each coordinate Fe cation.

It in the N-terminal section; belongs to the zinc metallo-hydrolase group 3 family. As to quaternary structure, homotetramer. Fe cation serves as cofactor. Requires FMN as cofactor.

It is found in the cytoplasm. It participates in nitrogen metabolism; nitric oxide reduction. Functionally, anaerobic nitric oxide reductase; uses NADH to detoxify nitric oxide (NO), protecting several 4Fe-4S NO-sensitive enzymes. Has at least 2 reductase partners, only one of which (NorW, flavorubredoxin reductase) has been identified. NO probably binds to the di-iron center; electrons enter from the reductase at rubredoxin and are transferred sequentially to the FMN center and the di-iron center. Also able to function as an aerobic oxygen reductase. The polypeptide is Anaerobic nitric oxide reductase flavorubredoxin (norV) (Escherichia coli (strain K12 / DH10B)).